We begin with the raw amino-acid sequence, 95 residues long: Small ribosomal subunit protein uS19 (95 aa).

A disordered region spans residues 75 to 95 (APTRSFRGHGGKKADKRGKMK). The segment covering 80–95 (FRGHGGKKADKRGKMK) has biased composition (basic residues).

Belongs to the universal ribosomal protein uS19 family.

Its function is as follows. Protein S19 forms a complex with S13 that binds strongly to the 16S ribosomal RNA. This chain is Small ribosomal subunit protein uS19, found in Roseiflexus sp. (strain RS-1).